A 461-amino-acid chain; its full sequence is Ribonuclease inhibitor (461 aa).

S2 bears the N-acetylserine mark. Positions 2–11 are 2 X 5 AA tandem repeats of S-L-D-I-Q; it reads SLDIQSLDIQ. 15 LRR repeats span residues 20–48, 49–76, 77–105, 106–133, 134–162, 163–190, 191–219, 220–247, 248–276, 277–304, 305–333, 334–361, 362–390, 391–418, and 419–447; these read WAEL…CKDI, SSAL…VHCV, LQGL…CGVL, SSTL…LQLL, CEGL…CKPL, ASVL…VRVL, CQGL…CRDL, CGIV…MAEL, CPGL…CGDL, CRVL…ARLL, CETL…CSHF, SSVL…VQEL, CQGL…CSSL, AATL…ILQL, and VESV…EDRL. The residue at position 91 (S91) is a Phosphoserine.

Forms high-affinity heterodimers with RNASE1, ANG and RNASE2.

The protein localises to the cytoplasm. It is found in the nucleus. Functionally, ribonuclease inhibitor which inhibits RNASE1, RNASE2 and angiogenin (ANG). May play a role in redox homeostasis. Required to inhibit the cytotoxic tRNA ribonuclease activity of ANG in the cytoplasm in absence of stress. Relocates to the nucleus in response to stress, relieving inhibition of ANG in the cytoplasm, and inhibiting the angiogenic activity of ANG in the nucleus. The protein is Ribonuclease inhibitor (RNH1) of Pan troglodytes (Chimpanzee).